The sequence spans 221 residues: Antigenic protein SchS34 (221 aa).

N-linked (GlcNAc...) asparagine glycans are attached at residues Asn-27, Asn-69, Asn-141, and Asn-215.

Expressed in the mycelium (at protein level).

Its subcellular location is the secreted. It is found in the spore. It localises to the spore wall. The protein localises to the cytoplasm. This is Antigenic protein SchS34 from Stachybotrys chartarum (Toxic black mold).